Consider the following 226-residue polypeptide: 2-C-methyl-D-erythritol 4-phosphate cytidylyltransferase (226 aa).

It belongs to the IspD/TarI cytidylyltransferase family. IspD subfamily.

It catalyses the reaction 2-C-methyl-D-erythritol 4-phosphate + CTP + H(+) = 4-CDP-2-C-methyl-D-erythritol + diphosphate. It functions in the pathway isoprenoid biosynthesis; isopentenyl diphosphate biosynthesis via DXP pathway; isopentenyl diphosphate from 1-deoxy-D-xylulose 5-phosphate: step 2/6. In terms of biological role, catalyzes the formation of 4-diphosphocytidyl-2-C-methyl-D-erythritol from CTP and 2-C-methyl-D-erythritol 4-phosphate (MEP). This Prochlorococcus marinus (strain MIT 9312) protein is 2-C-methyl-D-erythritol 4-phosphate cytidylyltransferase.